Here is a 476-residue protein sequence, read N- to C-terminus: Growth/differentiation factor 10 (476 aa).

A signal peptide spans 1–29; the sequence is MAPGLARISLRSQLLPLVPLLLLLRGAGC. Positions 30–366 are excised as a propeptide; the sequence is GHRVPSWSSL…EKTMQKARRR (337 aa). N-linked (GlcNAc...) asparagine glycans are attached at residues N114, N152, and N277. Disordered stretches follow at residues 268–305 and 330–358; these read GDFEPGAAPNSSADPRVRRAAQVSKPLQDNELPGLDER and PRTGRKDRKKKDQDTFTPSSSQVLDFDEK. 3 disulfide bridges follow: C374/C441, C403/C473, and C407/C475. A glycan (N-linked (GlcNAc...) asparagine) is linked at N467.

It belongs to the TGF-beta family. Homodimer or heterodimer. Can form a non-covalent complex of the mature region and the pro-region. In terms of tissue distribution, costa, costicartilage, femur, calvaria, trachea, aorta and brain. Predominantly in the cerebellum.

It localises to the secreted. Its function is as follows. Growth factor involved in osteogenesis and adipogenesis. Plays an inhibitory role in the process of osteoblast differentiation via SMAD2/3 pathway. Plays an inhibitory role in the process of adipogenesis. The chain is Growth/differentiation factor 10 from Rattus norvegicus (Rat).